The sequence spans 200 residues: Putative 3-methyladenine DNA glycosylase (200 aa).

This sequence belongs to the DNA glycosylase MPG family.

In Shouchella clausii (strain KSM-K16) (Alkalihalobacillus clausii), this protein is Putative 3-methyladenine DNA glycosylase.